A 1948-amino-acid chain; its full sequence is MRGPLGTEEELPRLFAEEMENEEEMSEEEDGGLEGFEDFFPAEPVSLPKKKPKKLKESKSKGKRKKKEGSNDELSENEEDLEEKSESEGSDYSPTKKKKKKLKEKKEKKAKRKKRDEDEEDNEDGGLKEPKSSGQLMAEWGLDDVDYLFSEDDYHTLTNYKAFSQFLRPLIAKKNPKIPMSKMMTVLGAKWREFSANNPFKGSSAAAAAAAVAAAVETVTIAPPLAISPQQVPQPLPVRKAKTKEGKGPGVRKKNKGAKDSKKKGRGKRVAGLKFRFGGISKRKKGSSSEEDEPEDSDLDNASIHSSSVRSECSAALGKKNKRRRKKKRIDDGDGYETDHQDYCEVCQQGGEIILCDTCPRAYHLVCLDPELEKAPEGKWSCPHCEKEGIQWEPKDDDEEEEEGGCEEEEDDHMEFCRVCKDGGELLCCDACPSSYHLHCLNPPLPEIPNGEWLCPRCTCPPLKGKVQRILHWRWTEPPAPFMVGLPGPEVEPGMPPPRPLEGIPEREFFVKWAGLSYWHCSWVKELQLELYHTVMYRNYQRKNDMDEPPPFDYGSGDEDGKSEKRKNKDPLYAKMEERFYRYGIKPEWMMVHRILNHSFDKKGDVHYLIKWKDLPYDQCTWEIDEIDIPYYDNLKQTYWGHRELMLGEDARLPKRLVKKGKKLKDDKQEKPPDTPIVDPTVKFDKQPWYIDSTGGTLHPYQLEGLNWLRFSWAQGTDTILADEMGLGKTVQTIVFLYSLYKEGHSKGPYLVSAPLSTIINWEREFEMWAPDFYVVTYTGDKESRSVIRENEFSFEDNAIRGGKKVFRMKKEVQIKFHVLLTSYELITIDQAILGSIEWACLVVDEAHRLKNNQSKFFRVLNSYKIDYKLLLTGTPLQNNLEELFHLLNFLTPERFNNLEGFLEEFADISKEDQIKKLHDLLGPHMLRRLKADVFKNMPAKTELIVRVELSQMQKKYYKFILTRNFEALNSKGGGNQVSLLNIMMDLKKCCNHPYLFPVAAVEAPMLPNGSYDGSSLVKSSGKLMLLQKMLKKLRDEGHRVLIFSQMTKMLDLLEDFLEYEGYKYERIDGGITGGLRQEAIDRFNAPGAQQFCFLLSTRAGGLGINLATADTVIIYDSDWNPHNDIQAFSRAHRIGQNKKVMIYRFVTRASVEERITQVAKRKMMLTHLVVRPGLGSKSGSMTKQELDDILKFGTEELFKDDVEGMMSQGQRPTTPIPDVQSTKGGSLAAGAKKKHGGTPPGDNKDVEDSSVIHYDDAAISKLLDRNQDATDDTELQNMNEYLSSFKVAQYVVREEDGVEEVEREVIKQEENVDPDYWEKLLRHHYEQQQEDLARNLGKGKRIRKQVNYNDASQEDQEWQDELSDNQSEYSIGSEDEDEDFEERPEGQSGRRQSRRQLKSDRDKPLPPLLARVGGNIEVLGFNARQRKAFLNAIMRWGMPPQDAFNSHWLVRDLRGKSEKEFRAYVSLFMRHLCEPGADGAETFADGVPREGLSRQHVLTRIGVMSLVRKKVQEFEHVNGKYSTPDLVPEGPEGKKPGEVISSDPNTPVPASPAQLPPAPLGLPDKMEAQLGYTDEKESGTQKPKKSLEIQALPTALDRVEAEDKHQSSDSKDRAREERMEEVEKAQGSPEQPLKEETLPDKEPVPDKLELSLSHSNDFRPDDPKAEEKEPTETQQNGDREEDEEGKKEDKNGKFKFMFNIADGGFTELHTLWQNEERAAVSSGKIYEIWHRRHDYWLLAGIVTHGYARWQDIQNDPRYMILNEPFKSEVHKGNYLEMKNKFLARRFKLLEQALVIEEQLRRAAYLNMTQDPNHPAMALNARLAEVECLAESHQHLSKESLAGNKPANAVLHKVLNQLEELLSDMKADVTRLPSMLSRIPPVAARLQMSERSILSRLTNRAGDPTIQQGAFGSSQMYNNSFGPNFRGPGPGGIVNYNQMPLGPYVTGR.

3 disordered regions span residues 1–136, 228–268, and 281–336; these read MRGP…SGQL, SPQQ…GRGK, and SKRK…GDGY. 2 stretches are compositionally biased toward acidic residues: residues 17-37 and 71-89; these read EEME…EGFE and NDEL…ESEG. Basic residues-rich tracts occupy residues 95–114 and 250–268; these read TKKK…KRKK and GVRK…GRGK. The span at 289–299 shows a compositional bias: acidic residues; it reads SEEDEPEDSDL. Over residues 319–328 the composition is skewed to basic residues; it reads KKNKRRRKKK. PHD-type zinc fingers lie at residues 341-388 and 414-461; these read QDYC…CEKE and MEFC…CTCP. The tract at residues 341 to 651 is histone-binding; sequence QDYCEVCQQG…HRELMLGEDA (311 aa). The Chromo 1 domain maps to 495–552; the sequence is MPPPRPLEGIPEREFFVKWAGLSYWHCSWVKELQLELYHTVMYRNYQRKNDMDEPPPF. The segment at 547 to 569 is disordered; sequence DEPPPFDYGSGDEDGKSEKRKNK. The span at 559–569 shows a compositional bias: basic and acidic residues; the sequence is EDGKSEKRKNK. The Chromo 2 domain maps to 590–651; that stretch reads MMVHRILNHS…HRELMLGEDA (62 aa). The Helicase ATP-binding domain occupies 710–894; that stretch reads RFSWAQGTDT…FHLLNFLTPE (185 aa). Position 723-730 (723-730) interacts with ATP; it reads DEMGLGKT. The DEAH box signature appears at 845-848; that stretch reads DEAH. The Helicase C-terminal domain occupies 1026–1191; sequence LLQKMLKKLR…MTKQELDDIL (166 aa). Disordered regions lie at residues 1206-1250, 1349-1409, 1521-1566, and 1595-1692; these read MMSQ…VEDS, YNDA…LPPL, KYST…LPDK, and TALD…EDKN. Composition is skewed to acidic residues over residues 1353-1364 and 1374-1383; these read SQEDQEWQDELS and SEDEDEDFEE. The residue at position 1388 (Gln-1388) is an N5-methylglutamine. The span at 1547-1561 shows a compositional bias: pro residues; it reads TPVPASPAQLPPAPL. Position 1552 is a phosphoserine (Ser-1552). 3 stretches are compositionally biased toward basic and acidic residues: residues 1598–1625, 1633–1650, and 1657–1672; these read DRVE…EVEK, PLKE…DKLE, and NDFR…KEPT.

This sequence belongs to the SNF2/RAD54 helicase family. Component of the nucleosome remodeling and deacetylase (NuRD) repressor complex, composed of core proteins MTA1, MTA2, MTA3, RBBP4, RBBP7, HDAC1, HDAC2, MBD2, MBD3, and peripherally associated proteins CDK2AP1, CDK2AP2, GATAD2A, GATAD2B, CHD3, CHD4 and CHD5. The exact stoichiometry of the NuRD complex is unknown, and some subunits such as MBD2 and MBD3, GATAD2A and GATAD2B, and CHD3, CHD4 and CHD5 define mutually exclusive NuRD complexes. Interacts with HDAC2. Post-translationally, methylated at Gln-1388 by N6AMT1. In terms of tissue distribution, expressed in brain regions enriched in neurons and not in regions rich in glial cells (at protein level).

It localises to the nucleus. It is found in the chromosome. It catalyses the reaction ATP + H2O = ADP + phosphate + H(+). In terms of biological role, ATP-dependent chromatin-remodeling factor that binds DNA through histones and regulates gene transcription. May specifically recognize and bind trimethylated 'Lys-27' (H3K27me3) and non-methylated 'Lys-4' of histone H3. Acts as a component of the histone deacetylase NuRD complex which participates in the remodeling of chromatin. Plays a role in the development of the nervous system by activating the expression of genes promoting neuron terminal differentiation. In parallel, it may also positively regulate the trimethylation of histone H3 at 'Lys-27' thereby specifically repressing genes that promote the differentiation into non-neuronal cell lineages. Regulates the expression of genes involved in cell proliferation and differentiation. Downstream activated genes may include CDKN2A that positively regulates the p53/TP53 pathway, which in turn, prevents cell proliferation. In spermatogenesis, it probably regulates histone hyperacetylation and the replacement of histones by transition proteins in chromatin, a crucial step in the condensation of spermatid chromatin and the production of functional spermatozoa. In Rattus norvegicus (Rat), this protein is Chromodomain-helicase-DNA-binding protein 5 (Chd5).